A 522-amino-acid polypeptide reads, in one-letter code: GMP synthase [glutamine-hydrolyzing] (522 aa).

Residues 8 to 204 (RLLIIDFGSQ…FVRLAGFKGD (197 aa)) form the Glutamine amidotransferase type-1 domain. The active-site Nucleophile is the Cys-86. Catalysis depends on residues His-179 and Glu-181. One can recognise a GMPS ATP-PPase domain in the interval 205–397 (WTMGAYREEA…LGLPASFIGR (193 aa)). Residue 232–238 (SGGVDSS) participates in ATP binding.

In terms of assembly, homodimer.

The catalysed reaction is XMP + L-glutamine + ATP + H2O = GMP + L-glutamate + AMP + diphosphate + 2 H(+). The protein operates within purine metabolism; GMP biosynthesis; GMP from XMP (L-Gln route): step 1/1. Its function is as follows. Catalyzes the synthesis of GMP from XMP. In Roseobacter denitrificans (strain ATCC 33942 / OCh 114) (Erythrobacter sp. (strain OCh 114)), this protein is GMP synthase [glutamine-hydrolyzing].